The primary structure comprises 1722 residues: Leucine-rich repeat- and IQ domain-containing protein 1 (1722 aa).

Disordered stretches follow at residues Ser23–Val47, Glu182–Glu202, Arg265–Asn285, and Gln319–Lys367. The segment covering Gln38–Val47 has biased composition (acidic residues). Residues Arg265–Ser278 show a composition bias toward basic and acidic residues. One can recognise an IQ 1 domain in the interval Gln283 to Glu312. 10 LRR repeats span residues Asn819 to Lys840, Lys841 to Glu861, Asn862 to Thr883, Asn884 to Glu905, Asn970 to Pro991, Thr992 to Gly1013, Leu1014 to Val1035, Leu1036 to Trp1057, Leu1060 to Val1081, and Ser1082 to Phe1103. The LRRCT domain maps to Asn1117–Gln1157. IQ domains lie at Lys1335–Ala1364 and Arg1395–Asn1424. Positions Ser1506–Pro1524 are enriched in polar residues. The segment at Ser1506–Leu1534 is disordered.

In Homo sapiens (Human), this protein is Leucine-rich repeat- and IQ domain-containing protein 1 (LRRIQ1).